We begin with the raw amino-acid sequence, 314 residues long: Glycerol-1-phosphate dehydrogenase [NAD(P)+] (314 aa).

NAD(+)-binding positions include 52 to 56 (GKPLD) and 74 to 77 (TSAS). Residue Asp79 participates in substrate binding. Ser83 is a binding site for NAD(+). Substrate is bound at residue Asp131. Zn(2+) is bound by residues Asp131 and His211. Substrate is bound at residue His215. His231 lines the Zn(2+) pocket.

It belongs to the glycerol-1-phosphate dehydrogenase family. The cofactor is Zn(2+).

It localises to the cytoplasm. The catalysed reaction is sn-glycerol 1-phosphate + NAD(+) = dihydroxyacetone phosphate + NADH + H(+). It carries out the reaction sn-glycerol 1-phosphate + NADP(+) = dihydroxyacetone phosphate + NADPH + H(+). It functions in the pathway membrane lipid metabolism; glycerophospholipid metabolism. In terms of biological role, catalyzes the NAD(P)H-dependent reduction of dihydroxyacetonephosphate (DHAP or glycerone phosphate) to glycerol 1-phosphate (G1P). The G1P thus generated is used as the glycerophosphate backbone of phospholipids in the cellular membranes of Archaea. The sequence is that of Glycerol-1-phosphate dehydrogenase [NAD(P)+] from Korarchaeum cryptofilum (strain OPF8).